A 409-amino-acid chain; its full sequence is tRNA(Met) cytidine acetate ligase (409 aa).

ATP-binding positions include 7 to 20 (VVEY…HLYH), Gly-102, Asn-169, and Arg-194.

Belongs to the TmcAL family.

The protein resides in the cytoplasm. It catalyses the reaction cytidine(34) in elongator tRNA(Met) + acetate + ATP = N(4)-acetylcytidine(34) in elongator tRNA(Met) + AMP + diphosphate. Catalyzes the formation of N(4)-acetylcytidine (ac(4)C) at the wobble position of elongator tRNA(Met), using acetate and ATP as substrates. First activates an acetate ion to form acetyladenylate (Ac-AMP) and then transfers the acetyl group to tRNA to form ac(4)C34. This Clostridium botulinum (strain Okra / Type B1) protein is tRNA(Met) cytidine acetate ligase.